We begin with the raw amino-acid sequence, 362 residues long: UDP-galactose transporter homolog 1 (362 aa).

Helical transmembrane passes span 7–27 (IFPVLFCAAGIYASFLTWALV), 45–65 (CPNVIAVVQAVAAVCVGYFYM), 111–131 (LTYMLAKSCKMIPVLLVHLII), 141–161 (SVVAVLVSIGVTIFTIGGSKG), and 175–195 (FFQKASGFLLLFLSLFMDGLT). Asparagine 196 carries an N-linked (GlcNAc...) asparagine glycan. 4 helical membrane-spanning segments follow: residues 234-254 (HMMFALNFFVAIWNIAYLLVI), 271-291 (IIVSYLLAYALCGSLGQCFIF), 296-316 (LYGSLVLIMITVTRKMMSMLL), and 317-337 (SIIVFGKTVNATQWLGIVIVF).

The protein belongs to the nucleotide-sugar transporter family. SLC35B subfamily.

It localises to the endoplasmic reticulum membrane. May be involved in specific transport of UDP-Gal from the cytosol to the Golgi lumen. Involved in the maintenance of optimal conditions for the folding of secretory pathway proteins in the endoplasmic reticulum. This chain is UDP-galactose transporter homolog 1 (HUT1), found in Candida glabrata (strain ATCC 2001 / BCRC 20586 / JCM 3761 / NBRC 0622 / NRRL Y-65 / CBS 138) (Yeast).